The following is a 262-amino-acid chain: MWITQEITPYLRKEYTIEAKLLDVRSEHNILEIFKSKDFGEIAMLNCQLLFKNFLHIESELLAHMGGCTKKELKEVLIVDGFDLELAHQLFKYDTHIDFVQADEKILDSFISFFPHFHEVKNNKNFTHAKQLLDLDIKKYDLILCLQEPDIHKMDGLKRMLKEDGVFISVAKHPLLEHVSMQNALKNMGGVFSVAMPFVAPLRILSNKGYIYASFKTHPLKDLMTPKIEALTSMRYYNEDIHRAAFALPKNLQEVFKDNIKS.

One can recognise a PABS domain in the interval Met-1–Pro-249. Asn-29 is an S-methyl-5'-thioadenosine binding site. Residue Asp-83 coordinates spermidine. Catalysis depends on Asp-155, which acts as the Proton acceptor.

The protein belongs to the spermidine/spermine synthase family. In terms of assembly, homodimer or homotetramer.

The protein localises to the cytoplasm. It carries out the reaction S-adenosyl 3-(methylsulfanyl)propylamine + putrescine = S-methyl-5'-thioadenosine + spermidine + H(+). Its pathway is amine and polyamine biosynthesis; spermidine biosynthesis; spermidine from putrescine: step 1/1. Functionally, catalyzes the irreversible transfer of a propylamine group from the amino donor S-adenosylmethioninamine (decarboxy-AdoMet) to putrescine (1,4-diaminobutane) to yield spermidine. The chain is Polyamine aminopropyltransferase from Helicobacter pylori (strain HPAG1).